The sequence spans 70 residues: Large ribosomal subunit protein bL28 (70 aa).

Positions 1-26 (MAKRCEVCGKAPRSGNTVSHSDKKSG) are disordered.

Belongs to the bacterial ribosomal protein bL28 family.

The protein is Large ribosomal subunit protein bL28 (rpmB) of Thermotoga maritima (strain ATCC 43589 / DSM 3109 / JCM 10099 / NBRC 100826 / MSB8).